Consider the following 206-residue polypeptide: MAKVDLFNQNGEKVGDLQLADSVFGVEVNTYAMHQVVKALLANKRQGTQSAKTRAEVSGGGIKPWRQKGTGRARQGSIRAPQWIHGGIVFAPKPRDYRMSIPKSMKKVAIKSALTSKVNENLMVVVDEIKLETPKTKEVVKMLNAFNAKKTLIITNNAEENVYKSARNIEGVQIIPVNNINVYDVLKYDKVIITKDAVSKIEEVYA.

Residues 48–75 (TQSAKTRAEVSGGGIKPWRQKGTGRARQ) form a disordered region.

This sequence belongs to the universal ribosomal protein uL4 family. As to quaternary structure, part of the 50S ribosomal subunit.

Functionally, one of the primary rRNA binding proteins, this protein initially binds near the 5'-end of the 23S rRNA. It is important during the early stages of 50S assembly. It makes multiple contacts with different domains of the 23S rRNA in the assembled 50S subunit and ribosome. Forms part of the polypeptide exit tunnel. This Clostridium botulinum (strain Loch Maree / Type A3) protein is Large ribosomal subunit protein uL4.